Here is a 225-residue protein sequence, read N- to C-terminus: Jeltraxin (225 aa).

Positions Met-1–Ala-19 are cleaved as a signal peptide. The Pentraxin (PTX) domain maps to Gly-21–Pro-223. Residues Cys-51 and Cys-112 are joined by a disulfide bond. Asp-75 and Asn-76 together coordinate Ca(2+). Asn-87 carries an N-linked (GlcNAc...) asparagine glycan. Ca(2+)-binding residues include Glu-153, Gln-154, Asp-155, and Gln-165. N-linked (GlcNAc...) asparagine glycosylation occurs at Asn-207.

As to quaternary structure, homodecamer consisting of two homopentamer units. Pentraxin (or pentaxin) have a discoid arrangement of 5 non-covalently bound subunits. Requires Ca(2+) as cofactor. Glycosylated. Oviduct. Highest expression levels were detected in the pars convoluta with lower levels detected in the pars recta. No expression was detected in the pars uterina.

Its subcellular location is the secreted. Functionally, calcium-dependent beta-galactose specific lectin. In Lepidobatrachus laevis (Budgett's frog), this protein is Jeltraxin.